Reading from the N-terminus, the 535-residue chain is CTP synthase (535 aa).

Positions 1–267 (MTKYIFVTGG…DSLVCSHLKL (267 aa)) are amidoligase domain. Serine 13 is a binding site for CTP. Serine 13 lines the UTP pocket. Position 14-19 (14-19 (SLGKGI)) interacts with ATP. L-glutamine is bound at residue tyrosine 54. ATP is bound at residue aspartate 71. Aspartate 71 and glutamate 141 together coordinate Mg(2+). CTP is bound by residues 148-150 (DIE), 188-193 (KTKPTQ), and lysine 224. UTP contacts are provided by residues 188–193 (KTKPTQ) and lysine 224. The region spanning 292-534 (TIALVGKYVE…VHASLKTSEK (243 aa)) is the Glutamine amidotransferase type-1 domain. Residue glycine 354 coordinates L-glutamine. Cysteine 381 (nucleophile; for glutamine hydrolysis) is an active-site residue. L-glutamine is bound by residues 382 to 385 (LGMQ), glutamate 405, and arginine 462. Catalysis depends on residues histidine 507 and glutamate 509.

It belongs to the CTP synthase family. As to quaternary structure, homotetramer.

It catalyses the reaction UTP + L-glutamine + ATP + H2O = CTP + L-glutamate + ADP + phosphate + 2 H(+). It carries out the reaction L-glutamine + H2O = L-glutamate + NH4(+). The enzyme catalyses UTP + NH4(+) + ATP = CTP + ADP + phosphate + 2 H(+). It functions in the pathway pyrimidine metabolism; CTP biosynthesis via de novo pathway; CTP from UDP: step 2/2. Allosterically activated by GTP, when glutamine is the substrate; GTP has no effect on the reaction when ammonia is the substrate. The allosteric effector GTP functions by stabilizing the protein conformation that binds the tetrahedral intermediate(s) formed during glutamine hydrolysis. Inhibited by the product CTP, via allosteric rather than competitive inhibition. Its function is as follows. Catalyzes the ATP-dependent amination of UTP to CTP with either L-glutamine or ammonia as the source of nitrogen. Regulates intracellular CTP levels through interactions with the four ribonucleotide triphosphates. The sequence is that of CTP synthase from Bacillus licheniformis (strain ATCC 14580 / DSM 13 / JCM 2505 / CCUG 7422 / NBRC 12200 / NCIMB 9375 / NCTC 10341 / NRRL NRS-1264 / Gibson 46).